The following is a 445-amino-acid chain: Proline--tRNA ligase (445 aa).

It belongs to the class-II aminoacyl-tRNA synthetase family. ProS type 2 subfamily. Homodimer.

It is found in the cytoplasm. The enzyme catalyses tRNA(Pro) + L-proline + ATP = L-prolyl-tRNA(Pro) + AMP + diphosphate. In terms of biological role, catalyzes the attachment of proline to tRNA(Pro) in a two-step reaction: proline is first activated by ATP to form Pro-AMP and then transferred to the acceptor end of tRNA(Pro). This is Proline--tRNA ligase from Cereibacter sphaeroides (strain ATCC 17025 / ATH 2.4.3) (Rhodobacter sphaeroides).